Consider the following 1059-residue polypeptide: WD repeat-containing protein on Y chromosome (1059 aa).

WD repeat units lie at residues 121–161, 170–209, 214–256, 344–383, 387–426, 476–515, 528–567, 616–658, 714–759, 766–805, and 849–888; these read DFCP…ALTA, RSKT…FTLK, RLPQ…KVTT, CVPR…KPSV, GHTS…LLQT, SHTK…KMTI, LEPV…CMRT, QHSD…RRYD, MRQL…GFKG, MAGD…IPNE, and AHRA…IGLL.

In Anopheles gambiae (African malaria mosquito), this protein is WD repeat-containing protein on Y chromosome.